The primary structure comprises 334 residues: Holliday junction branch migration complex subunit RuvB (334 aa).

The large ATPase domain (RuvB-L) stretch occupies residues 1–182; the sequence is MDERLVSSEA…FGVMSRLEYY (182 aa). ATP contacts are provided by residues L21, R22, G63, K66, T67, T68, 129 to 131, R172, Y182, and R219; that span reads EDF. Residue T67 participates in Mg(2+) binding. The tract at residues 183–253 is small ATPAse domain (RuvB-S); the sequence is TQEELADIVT…ISQNALERLQ (71 aa). The tract at residues 256–334 is head domain (RuvB-H); it reads RLGLDHIDHK…HFQMEAPRYD (79 aa). DNA contacts are provided by R311 and R316.

It belongs to the RuvB family. As to quaternary structure, homohexamer. Forms an RuvA(8)-RuvB(12)-Holliday junction (HJ) complex. HJ DNA is sandwiched between 2 RuvA tetramers; dsDNA enters through RuvA and exits via RuvB. An RuvB hexamer assembles on each DNA strand where it exits the tetramer. Each RuvB hexamer is contacted by two RuvA subunits (via domain III) on 2 adjacent RuvB subunits; this complex drives branch migration. In the full resolvosome a probable DNA-RuvA(4)-RuvB(12)-RuvC(2) complex forms which resolves the HJ. Homohexamer which interacts with RecU.

It localises to the cytoplasm. It carries out the reaction ATP + H2O = ADP + phosphate + H(+). In terms of biological role, the RuvA-RuvB-RuvC complex processes Holliday junction (HJ) DNA during genetic recombination and DNA repair, while the RuvA-RuvB complex plays an important role in the rescue of blocked DNA replication forks via replication fork reversal (RFR). RuvA specifically binds to HJ cruciform DNA, conferring on it an open structure. The RuvB hexamer acts as an ATP-dependent pump, pulling dsDNA into and through the RuvAB complex. RuvB forms 2 homohexamers on either side of HJ DNA bound by 1 or 2 RuvA tetramers; 4 subunits per hexamer contact DNA at a time. Coordinated motions by a converter formed by DNA-disengaged RuvB subunits stimulates ATP hydrolysis and nucleotide exchange. Immobilization of the converter enables RuvB to convert the ATP-contained energy into a lever motion, pulling 2 nucleotides of DNA out of the RuvA tetramer per ATP hydrolyzed, thus driving DNA branch migration. The RuvB motors rotate together with the DNA substrate, which together with the progressing nucleotide cycle form the mechanistic basis for DNA recombination by continuous HJ branch migration. Branch migration allows RuvC to scan DNA until it finds its consensus sequence, where it cleaves and resolves cruciform DNA. This is Holliday junction branch migration complex subunit RuvB from Bacillus subtilis (strain 168).